Consider the following 221-residue polypeptide: Probable serine protease inhibitor 6 (221 aa).

A signal peptide spans 1 to 22 (MKCLFLLCLCLFPIVVFSSTFT). The propeptide occupies 23–28 (SQNPIN). The Vacuolar targeting signal motif lies at 25–30 (NPINLP). 2 disulfides stabilise this stretch: cysteine 76–cysteine 125 and cysteine 174–cysteine 191.

Belongs to the protease inhibitor I3 (leguminous Kunitz-type inhibitor) family.

Its subcellular location is the vacuole. In terms of biological role, inhibitor of trypsin (serine protease). May protect the plant by inhibiting proteases of invading organisms. This chain is Probable serine protease inhibitor 6, found in Solanum tuberosum (Potato).